The primary structure comprises 490 residues: Glutamyl-tRNA(Gln) amidotransferase subunit A (490 aa).

Catalysis depends on charge relay system residues Lys-79 and Ser-154. Ser-178 (acyl-ester intermediate) is an active-site residue.

The protein belongs to the amidase family. GatA subfamily. As to quaternary structure, heterotrimer of A, B and C subunits.

It catalyses the reaction L-glutamyl-tRNA(Gln) + L-glutamine + ATP + H2O = L-glutaminyl-tRNA(Gln) + L-glutamate + ADP + phosphate + H(+). In terms of biological role, allows the formation of correctly charged Gln-tRNA(Gln) through the transamidation of misacylated Glu-tRNA(Gln) in organisms which lack glutaminyl-tRNA synthetase. The reaction takes place in the presence of glutamine and ATP through an activated gamma-phospho-Glu-tRNA(Gln). This Roseiflexus castenholzii (strain DSM 13941 / HLO8) protein is Glutamyl-tRNA(Gln) amidotransferase subunit A.